A 664-amino-acid chain; its full sequence is DNA-directed DNA polymerase (664 aa).

Positions 352 to 378 are disordered; the sequence is RRQKDDESDGTAGAAYGRLSSEHPNLQ.

This sequence belongs to the DNA polymerase type-A family. DpoZ subfamily.

The catalysed reaction is DNA(n) + a 2'-deoxyribonucleoside 5'-triphosphate = DNA(n+1) + diphosphate. Functionally, DNA polymerase that replicates the viral genomic DNA. Also incorporates 5-hydroxymethyl-2'-deoxyuridine (5-hmdU) instead of dTMP into DNA during replication, as an early step in the pathway of thymidine hypermodifications of the viral genome. As a final result of the pathway of hypermodification, 5-aminoethyl-2'-deoxyuridine (5-NedU) substitutes for about 30% of thymidines in the viral DNA. These modifications probably prevent degradation of viral genome by the host restriction-modification antiviral defense system. This chain is DNA-directed DNA polymerase (gp62), found in Pseudomonas phage M6.